We begin with the raw amino-acid sequence, 216 residues long: 3-isopropylmalate dehydratase small subunit (216 aa).

The protein belongs to the LeuD family. LeuD type 1 subfamily. As to quaternary structure, heterodimer of LeuC and LeuD.

The enzyme catalyses (2R,3S)-3-isopropylmalate = (2S)-2-isopropylmalate. The protein operates within amino-acid biosynthesis; L-leucine biosynthesis; L-leucine from 3-methyl-2-oxobutanoate: step 2/4. Its function is as follows. Catalyzes the isomerization between 2-isopropylmalate and 3-isopropylmalate, via the formation of 2-isopropylmaleate. This Albidiferax ferrireducens (strain ATCC BAA-621 / DSM 15236 / T118) (Rhodoferax ferrireducens) protein is 3-isopropylmalate dehydratase small subunit.